Consider the following 1690-residue polypeptide: Lysine-specific demethylase 5A (1690 aa).

The 42-residue stretch at 19-60 (CPVFEPSWEEFTDPLSFIGRIRPLAEKTGICKIRPPKDWQPP) folds into the JmjN domain. Residues 84 to 174 (TRVRLDFLDQ…ILYPYELFQS (91 aa)) form the ARID domain. A Glycyl lysine isopeptide (Lys-Gly) (interchain with G-Cter in SUMO2) cross-link involves residue Lys191. Position 204 is a phosphoserine (Ser204). The PHD-type 1 zinc finger occupies 293–343 (LYVCMFCGRGNNEDKLLLCDGCDDSYHTFCLIPPLPDVPKGDWRCPKCVAE). A 2-oxoglutarate-binding site is contributed by Tyr409. A GSGFP motif motif is present at residues 419–423 (GSGFP). The JmjC domain occupies 437–603 (EYALSGWNLN…IGRQCVNHYR (167 aa)). Fe cation is bound by residues His483 and Glu485. Residues Ser491, Asn493, and Lys501 each coordinate 2-oxoglutarate. His571 is a Fe cation binding site. The segment at 676-728 (CSACRTTCFLSALTCSCNPERLVCLYHPTDLCPCPMQKKCLRYRYPLEDLPSL) adopts a C5HC2 zinc-finger fold. Residue Lys1007 forms a Glycyl lysine isopeptide (Lys-Gly) (interchain with G-Cter in SUMO2) linkage. Ser1111 is modified (phosphoserine). A PHD-type 2 zinc finger spans residues 1161 to 1218 (VKFCICRKTASGFMLQCELCKDWFHNSCVPLPKSSSQKKGSSWQAKEVKFLCPLCMRS). Disordered regions lie at residues 1327–1348 (SVSSSPRQTMDYDDEETDSDED) and 1407–1433 (KSCSQGSSTPRKQPRKSPLVPRSLEPP). Ser1330 and Ser1331 each carry phosphoserine. The segment covering 1337–1348 (DYDDEETDSDED) has biased composition (acidic residues). The residue at position 1343 (Thr1343) is a Phosphothreonine. A Phosphoserine modification is found at Ser1345. A phosphoserine mark is found at Ser1438 and Ser1488. Basic and acidic residues-rich tracts occupy residues 1490–1503 (EEKPLKVKGKDSSE) and 1520–1530 (GKQKSKELKKM). Disordered regions lie at residues 1490–1509 (EEKPLKVKGKDSSEKKRKRK) and 1516–1543 (LFGEGKQKSKELKKMDKPRKKKLKLGAD). The residue at position 1595 (Tyr1595) is a Phosphotyrosine. Phosphoserine occurs at positions 1598 and 1603. The PHD-type 3 zinc finger occupies 1607–1661 (NAVCAAQNCQRPCKDKVDWVQCDGGCDEWFHQVCVGVSPEMAENEDYICINCAKK). The interval 1623–1690 (VDWVQCDGGC…LPMEDLKETS (68 aa)) is interaction with LMO2. Ser1666 bears the Phosphoserine mark.

The protein belongs to the JARID1 histone demethylase family. In terms of assembly, interacts with SUZ12; the interaction is direct. Interacts with the viral protein-binding domain of RB1. Interacts with ESR1, MYC, MYCN and LMO2. Interacts with HDAC1; this interaction impairs histone deacetylation by HDAC1. Interacts with BMAL1 and CLOCK. Interacts (via PHD-type 1 zinc finger) with histone H3 unmodified at 'Lys-4' and (via PHD-type 3 zinc finger) with histone H3 di- and trimethylated at 'Lys-4'. The cofactor is Fe(2+).

It is found in the nucleus. The protein resides in the nucleolus. It carries out the reaction N(6),N(6),N(6)-trimethyl-L-lysyl(4)-[histone H3] + 3 2-oxoglutarate + 3 O2 = L-lysyl(4)-[histone H3] + 3 formaldehyde + 3 succinate + 3 CO2. Its activity is regulated as follows. The inhibitors KDOAM-25, CPI-455 and others inhibits its demethylase activity, resulting to cell growth arrest in cancer cells. In terms of biological role, histone demethylase that specifically demethylates 'Lys-4' of histone H3, thereby playing a central role in histone code. Does not demethylate histone H3 'Lys-9', H3 'Lys-27', H3 'Lys-36', H3 'Lys-79' or H4 'Lys-20'. Demethylates trimethylated and dimethylated but not monomethylated H3 'Lys-4'. Regulates specific gene transcription through DNA-binding on 5'-CCGCCC-3' motif. May stimulate transcription mediated by nuclear receptors. Involved in transcriptional regulation of Hox proteins during cell differentiation. May participate in transcriptional repression of cytokines such as CXCL12. Plays a role in the regulation of the circadian rhythm and in maintaining the normal periodicity of the circadian clock. In a histone demethylase-independent manner, acts as a coactivator of the CLOCK-BMAL1-mediated transcriptional activation of PER1/2 and other clock-controlled genes and increases histone acetylation at PER1/2 promoters by inhibiting the activity of HDAC1. Seems to act as a transcriptional corepressor for some genes such as MT1F and to favor the proliferation of cancer cells. This chain is Lysine-specific demethylase 5A, found in Homo sapiens (Human).